A 62-amino-acid chain; its full sequence is Sperm protamine P1 (62 aa).

A disordered region spans residues 1–62; the sequence is MARYRHSRSR…RYSRRRRRRY (62 aa).

This sequence belongs to the protamine P1 family. Testis.

It is found in the nucleus. The protein resides in the chromosome. Functionally, protamines substitute for histones in the chromatin of sperm during the haploid phase of spermatogenesis. They compact sperm DNA into a highly condensed, stable and inactive complex. This is Sperm protamine P1 (PRM1) from Dorcopsulus vanheurni (Lesser forest wallaby).